Reading from the N-terminus, the 96-residue chain is Ribonuclease P protein component 1 (96 aa).

This sequence belongs to the eukaryotic/archaeal RNase P protein component 1 family. Consists of a catalytic RNA component and at least 5 protein subunits.

The protein localises to the cytoplasm. It catalyses the reaction Endonucleolytic cleavage of RNA, removing 5'-extranucleotides from tRNA precursor.. Functionally, part of ribonuclease P, a protein complex that generates mature tRNA molecules by cleaving their 5'-ends. The chain is Ribonuclease P protein component 1 from Methanococcus maripaludis (strain DSM 14266 / JCM 13030 / NBRC 101832 / S2 / LL).